The following is a 620-amino-acid chain: Guanylate-binding protein 3 (620 aa).

A GTPase domain (Globular) region spans residues 1–304; the sequence is MEAPICLVEN…NAINSGTVPC (304 aa). Positions 29–271 constitute a GB1/RHD3-type G domain; the sequence is AQPLVVVAIV…FCSYIFTNGK (243 aa). GTP is bound by residues 39 to 46, 61 to 63, and 91 to 95; these read GLYRTGKS, LGS, and DTEGL. 2 coiled-coil regions span residues 375-411 and 477-582; these read KKLV…SESL and DGER…TRRK.

The protein belongs to the TRAFAC class dynamin-like GTPase superfamily. GB1/RHD3 GTPase family. GB1 subfamily. In terms of assembly, heterodimer with other family members, including GBP1, GBP2 and GBP5. Dimerization regulates subcellular location. In terms of tissue distribution, brain, lung, heart, spleen, kidney, liver and intestine.

It localises to the cytoplasm. The protein resides in the perinuclear region. The protein localises to the golgi apparatus membrane. The enzyme catalyses GTP + H2O = GDP + phosphate + H(+). Its function is as follows. Interferon (IFN)-inducible GTPase that plays important roles in innate immunity against a diverse range of bacterial, viral and protozoan pathogens. Hydrolyzes GTP very efficiently; GDP rather than GMP is the major reaction product. Following infection, recruited to the pathogen-containing vacuoles or vacuole-escaped bacteria and acts as a positive regulator of inflammasome assembly by promoting the release of inflammasome ligands from bacteria. Acts by promoting lysis of pathogen-containing vacuoles, releasing pathogens into the cytosol. Following pathogen release in the cytosol, promotes recruitment of proteins that mediate bacterial cytolysis, such as Gm12250/Irgb10: this liberates ligands that are detected by inflammasomes, such as lipopolysaccharide (LPS) that activates the non-canonical CASP4/CASP11 inflammasome or double-stranded DNA (dsDNA) that activates the AIM2 inflammasome. May play a role in erythroid differentiation. In Mus musculus (Mouse), this protein is Guanylate-binding protein 3.